Here is an 853-residue protein sequence, read N- to C-terminus: DNA mismatch repair protein MutS (853 aa).

Position 614–621 (614–621 (GPNMGGKS)) interacts with ATP.

Belongs to the DNA mismatch repair MutS family.

Functionally, this protein is involved in the repair of mismatches in DNA. It is possible that it carries out the mismatch recognition step. This protein has a weak ATPase activity. The chain is DNA mismatch repair protein MutS from Escherichia coli O127:H6 (strain E2348/69 / EPEC).